The primary structure comprises 379 residues: Arginine biosynthesis bifunctional protein ArgJ (379 aa).

Residues Thr140, Lys160, Thr171, Glu249, Asn374, and Thr379 each contribute to the substrate site. The Nucleophile role is filled by Thr171.

The protein belongs to the ArgJ family. In terms of assembly, heterotetramer of two alpha and two beta chains.

The protein resides in the cytoplasm. It catalyses the reaction N(2)-acetyl-L-ornithine + L-glutamate = N-acetyl-L-glutamate + L-ornithine. It carries out the reaction L-glutamate + acetyl-CoA = N-acetyl-L-glutamate + CoA + H(+). It functions in the pathway amino-acid biosynthesis; L-arginine biosynthesis; L-ornithine and N-acetyl-L-glutamate from L-glutamate and N(2)-acetyl-L-ornithine (cyclic): step 1/1. The protein operates within amino-acid biosynthesis; L-arginine biosynthesis; N(2)-acetyl-L-ornithine from L-glutamate: step 1/4. Catalyzes two activities which are involved in the cyclic version of arginine biosynthesis: the synthesis of N-acetylglutamate from glutamate and acetyl-CoA as the acetyl donor, and of ornithine by transacetylation between N(2)-acetylornithine and glutamate. This Archaeoglobus fulgidus (strain ATCC 49558 / DSM 4304 / JCM 9628 / NBRC 100126 / VC-16) protein is Arginine biosynthesis bifunctional protein ArgJ.